The primary structure comprises 205 residues: LexA repressor (205 aa).

Residues 28–48 (RAEIAASLGFRSPNAAEEHLK) constitute a DNA-binding region (H-T-H motif). Catalysis depends on for autocatalytic cleavage activity residues S122 and K159.

Belongs to the peptidase S24 family. In terms of assembly, homodimer.

The catalysed reaction is Hydrolysis of Ala-|-Gly bond in repressor LexA.. Functionally, represses a number of genes involved in the response to DNA damage (SOS response), including recA and lexA. Binds to the 16 bp palindromic sequence 5'-CTGTATATATATACAG-3'. In the presence of single-stranded DNA, RecA interacts with LexA causing an autocatalytic cleavage which disrupts the DNA-binding part of LexA, leading to derepression of the SOS regulon and eventually DNA repair. This is LexA repressor from Providencia rettgeri.